The primary structure comprises 446 residues: tRNA modification GTPase MnmE (446 aa).

(6S)-5-formyl-5,6,7,8-tetrahydrofolate contacts are provided by R24, E81, and K120. The 153-residue stretch at 216-368 (GLHAVLIGPP…LHIRLRELAL (153 aa)) folds into the TrmE-type G domain. A K(+)-binding site is contributed by N226. GTP is bound by residues 226-231 (NAGKSS), 245-251 (TDVAGTT), and 270-273 (DTAG). A Mg(2+)-binding site is contributed by S230. 3 residues coordinate K(+): T245, V247, and T250. Residue T251 participates in Mg(2+) binding. K446 provides a ligand contact to (6S)-5-formyl-5,6,7,8-tetrahydrofolate.

This sequence belongs to the TRAFAC class TrmE-Era-EngA-EngB-Septin-like GTPase superfamily. TrmE GTPase family. In terms of assembly, homodimer. Heterotetramer of two MnmE and two MnmG subunits. The cofactor is K(+).

The protein resides in the cytoplasm. Functionally, exhibits a very high intrinsic GTPase hydrolysis rate. Involved in the addition of a carboxymethylaminomethyl (cmnm) group at the wobble position (U34) of certain tRNAs, forming tRNA-cmnm(5)s(2)U34. The polypeptide is tRNA modification GTPase MnmE (Xanthomonas oryzae pv. oryzae (strain KACC10331 / KXO85)).